Reading from the N-terminus, the 247-residue chain is Putative ankyrin repeat protein RBE_1110 (247 aa).

ANK repeat units lie at residues 105–135 and 139–171; these read QNKD…CIDY and EGHN…KLIT.

This chain is Putative ankyrin repeat protein RBE_1110, found in Rickettsia bellii (strain RML369-C).